Consider the following 108-residue polypeptide: Translation initiation factor 1A (108 aa).

One can recognise an S1-like domain in the interval 11–85; sequence PSKDVPKPEE…TKADIVYRYM (75 aa).

This sequence belongs to the eIF-1A family.

Seems to be required for maximal rate of protein biosynthesis. Enhances ribosome dissociation into subunits and stabilizes the binding of the initiator Met-tRNA(I) to 40 S ribosomal subunits. In Metallosphaera sedula (strain ATCC 51363 / DSM 5348 / JCM 9185 / NBRC 15509 / TH2), this protein is Translation initiation factor 1A (eIF1A).